The primary structure comprises 55 residues: Large ribosomal subunit protein bL33 (55 aa).

This sequence belongs to the bacterial ribosomal protein bL33 family.

This is Large ribosomal subunit protein bL33 from Campylobacter fetus subsp. fetus (strain 82-40).